A 770-amino-acid chain; its full sequence is MGQKRQRDQKGPTLHVRKRKRTGKPTNVAERESKPEVVVGVDDLNWKEVALPDRLDNFEGFFGLEEIEGVDIVRPQGNGQLRFKSAPGKPGKSILKKPTPKSEETEFDDEWNGFSDEDLEKKEGASTVNEVAKAADVNGKKGKDAKNKKDIKAKEPKKKLKEQKEKDGAQAKDRSITSGLSFAALEDEADDDGADISAWEPLGLSPETLTSLSKLKFSTPTSVQKSCIPPILDGHDVIGKASTGSGKTLAFGLPILEHYLERERRKTIDSEEEKEKIPIALILSPTRELAHQLQKHIYGLISNAPGVNARTALLTGGLSVQKQQRLLETADIVIGTPGRVWEVLRTGQGLIRRMQGIKFLVIDEADRLLSEGHFKEVEDILSSLDRVEDGGPPDEEDDSSEENVVPGVERQTLVFSATFHRDLQQKLAGKGKWTGGDIMNKKESMEYLLQKLNFREEKPKFIDVNPVSQMAEGLKEGIVECPAMEKDLYLYTLLLYHPKHRTLVFTNSISAVRRITQLLQTLQLPALALHSSMAQKARLRSVERFSSSTANPGTILVATDVAARGLDIKGIDFVIHYHAPRTADTYVHRSGRTARAGASGKSVIICSPEEMVGVVRLAAKVHANMANGKKLPLESLELDRRIVSRVRQRVVLAARITDSNIAKEKITTEDNWLRNAAEDLGVEYDSDEFDQAKGWGRGRGRGRQERDRQVGSTSKAELAGLRAELKELLSQRVNLGVSERYLTSGRVDIEALLREEGNNSFLGQVDPLGF.

The span at 1–10 (MGQKRQRDQK) shows a compositional bias: basic and acidic residues. Disordered regions lie at residues 1-33 (MGQK…ERES) and 78-174 (NGQL…AKDR). Acidic residues predominate over residues 105–118 (TEFDDEWNGFSDED). Basic and acidic residues-rich tracts occupy residues 138–154 (NGKK…IKAK) and 162–174 (EQKE…AKDR). The Q motif signature appears at 197-225 (SAWEPLGLSPETLTSLSKLKFSTPTSVQK). The Helicase ATP-binding domain occupies 228-437 (IPPILDGHDV…AGKGKWTGGD (210 aa)). 241–248 (ASTGSGKT) is an ATP binding site. The short motif at 363–366 (DEAD) is the DEAD box element. The tract at residues 384–404 (LDRVEDGGPPDEEDDSSEENV) is disordered. Acidic residues predominate over residues 391–401 (GPPDEEDDSSE). The 151-residue stretch at 489–639 (YLYTLLLYHP…KLPLESLELD (151 aa)) folds into the Helicase C-terminal domain. Residues 693-713 (KGWGRGRGRGRQERDRQVGST) are disordered.

It belongs to the DEAD box helicase family. DDX24/MAK5 subfamily.

It is found in the nucleus. Its subcellular location is the nucleolus. The catalysed reaction is ATP + H2O = ADP + phosphate + H(+). ATP-binding RNA helicase involved in the biogenesis of 60S ribosomal subunits and is required for the normal formation of 25S and 5.8S rRNAs. The polypeptide is ATP-dependent RNA helicase mak5 (mak5) (Emericella nidulans (strain FGSC A4 / ATCC 38163 / CBS 112.46 / NRRL 194 / M139) (Aspergillus nidulans)).